Consider the following 536-residue polypeptide: Multifunctional cytochrome P450 monooxygenase af510 (536 aa).

The chain crosses the membrane as a helical span at residues 4–24 (ELSTLQLSCVAFVAFMAVLVF). N-linked (GlcNAc...) asparagine glycans are attached at residues N210 and N293. Heme is bound at residue C448.

The protein belongs to the cytochrome P450 family. Heme is required as a cofactor.

Its subcellular location is the membrane. It catalyses the reaction (+)-exo-beta-bergamotene + 2 reduced [NADPH--hemoprotein reductase] + 3 O2 = 5-dehydro-6-demethoxyfumagillol + 2 oxidized [NADPH--hemoprotein reductase] + 3 H2O + 2 H(+). It participates in secondary metabolite biosynthesis; terpenoid biosynthesis. Functionally, multifunctional cytochrome P450 monooxygenase; part of the gene cluster that mediates the biosynthesis of fumagillin, a meroterpenoid that has numerous biological activities including irreversible inhibition of human type 2 methionine aminopeptidase (METAP2). Within the pathway, the multifunctional cytochrome P450 monooxygenase af510 acts as a 2,4,6-trichlorophenol monooxygenase that first performs the C-H hydroxylation at the bridgehead C5 position to yield 5R-hydroxyl-beta-trans-bergamotene. Subsequently, a four electron oxidation initiated at C-9 coupled to cleavage of the cyclobutane C5-C8 bond of the bicyclo[3.1.1] core yields the epoxyketone intermediate 5-keto-cordycol. An additional epoxidation reaction also catalyzed by af510 then furnishes the characteristic bisepoxide ketone 5-keto-demethoxyfumagillol. The pathway begins with the conversion of farnesyl pyrophosphate (FPP) to beta-trans-bergamotene by the membrane-bound beta-trans-bergamotene synthase af520. The multifunctional cytochrome P450 monooxygenase af510 then converts beta-trans-bergamotene into 5-keto-demethoxyfumagillol via several oxydation steps. 5-keto-demethoxyfumagillol is then subjected to successive C-6 hydroxylation and O-methylation by the dioxygenase af480 and O-methyltransferase af390-400, respectively, to yield 5-keto-fumagillol, which is then stereoselectively reduced by the keto-reductase af490 to 5R-hydroxy-seco-sesquiterpene. The next step is the polyketide transferase af380-catalyzed transfer of a dodecapentaenoyl group synthesized by the polyketide synthase af370 onto 5R-hydroxy-seco-sesquiterpene which leads to the production of prefumagillin. Finally, oxidative cleavage by the monooxygenase af470 converts prefumagillin to fumagillin. The sequence is that of Multifunctional cytochrome P450 monooxygenase af510 from Aspergillus fumigatus (strain ATCC MYA-4609 / CBS 101355 / FGSC A1100 / Af293) (Neosartorya fumigata).